The primary structure comprises 436 residues: MQQVNVIGGGLAGCEAAYYLAQKGIRVRLWEMRPQKATAVHRTADLGELVCSNSLKSDQPNTAQGLLKREMRILGSLLLSCAEKARVPAGSALAVDRELFAGLVSQAILACPSIELCREEVNRVPTGELSIVASGPLTSEALAADLRRITGEENLFFYDAVAPSISADSLDMNKIFRASRYGKGSADYLNCPLDREEYESFYENLINADIKAGHSIDKSLFFNACMPAEVIARRGKDALRYGPMRPVGLEIPGSSKRAYAVLQLRQEDKAGTIYGMVGFQTRMRWGEQERIFRLIPGLEQAEFVRYGVMHRNTYINSPKLLWPSLQCKKRPEIFFAGQITGVEGYMESAATGIIAGINAARWLQGKALLTPHKATIIGALLDFISSSSSQDFQPMNANFGLLPPMEPPIKDKAKRYLAYVERALNKMGEFSESLLN.

Residue 8–13 coordinates FAD; that stretch reads GGGLAG.

This sequence belongs to the MnmG family. TrmFO subfamily. It depends on FAD as a cofactor.

It is found in the cytoplasm. The enzyme catalyses uridine(54) in tRNA + (6R)-5,10-methylene-5,6,7,8-tetrahydrofolate + NADH + H(+) = 5-methyluridine(54) in tRNA + (6S)-5,6,7,8-tetrahydrofolate + NAD(+). The catalysed reaction is uridine(54) in tRNA + (6R)-5,10-methylene-5,6,7,8-tetrahydrofolate + NADPH + H(+) = 5-methyluridine(54) in tRNA + (6S)-5,6,7,8-tetrahydrofolate + NADP(+). In terms of biological role, catalyzes the folate-dependent formation of 5-methyl-uridine at position 54 (M-5-U54) in all tRNAs. The chain is Methylenetetrahydrofolate--tRNA-(uracil-5-)-methyltransferase TrmFO from Syntrophomonas wolfei subsp. wolfei (strain DSM 2245B / Goettingen).